The chain runs to 388 residues: MNIHEYQGKEIFRSMGVAVPEGRVAFTAEEAVEKAKEFNSDVYVVKAQIHAGGRGKAGGVKIAKSLSEVETYAKELLGKTLVTHQTGPEGKEIKRLYIEEGCAIQKEYYVGFVIDRATDQVTLMASEEGGTEIEEVAAKTPEKIFKETIDPVIGLSPFQARRIAFNINIPKESVNKAAKFLLALYNVFIEKDCSIVEINPLVTTADGDVLVLDAKINFDDNALFRHKDVVELRDLEEEDPKEIEASKHDLSYIALDGDIGCMVNGAGLAMATMDTINHFGGNPANFLDAGGSATREKVTEAFKIILGDENVKGIFVNIFGGIMKCDVIAEGIVEAVKEVDLTLPLVVRLEGTNVELGKKILKDSGLAIEPAATMAEGAQKIVKLVKEA.

An ATP-grasp domain is found at 9-244 (KEIFRSMGVA…LEEEDPKEIE (236 aa)). ATP contacts are provided by residues lysine 46, 53–55 (GRG), glutamate 99, cysteine 102, and glutamate 107. Mg(2+) is bound by residues asparagine 199 and aspartate 213. Substrate-binding positions include asparagine 264 and 321 to 323 (GIM).

Belongs to the succinate/malate CoA ligase beta subunit family. As to quaternary structure, heterotetramer of two alpha and two beta subunits. Mg(2+) is required as a cofactor.

The enzyme catalyses succinate + ATP + CoA = succinyl-CoA + ADP + phosphate. It catalyses the reaction GTP + succinate + CoA = succinyl-CoA + GDP + phosphate. Its pathway is carbohydrate metabolism; tricarboxylic acid cycle; succinate from succinyl-CoA (ligase route): step 1/1. Functionally, succinyl-CoA synthetase functions in the citric acid cycle (TCA), coupling the hydrolysis of succinyl-CoA to the synthesis of either ATP or GTP and thus represents the only step of substrate-level phosphorylation in the TCA. The beta subunit provides nucleotide specificity of the enzyme and binds the substrate succinate, while the binding sites for coenzyme A and phosphate are found in the alpha subunit. The sequence is that of Succinate--CoA ligase [ADP-forming] subunit beta from Staphylococcus aureus (strain bovine RF122 / ET3-1).